The chain runs to 247 residues: Mitochondrial inner membrane protease ATP23 (247 aa).

Residues 1–21 (MSVPPPPKEDLIKPNPPKSES) form a disordered region. A divalent metal cation is bound at residue H144. Residue E145 is part of the active site. Residue H148 coordinates a divalent metal cation.

This sequence belongs to the peptidase M76 family.

Its subcellular location is the mitochondrion inner membrane. Has a dual role in the assembly of mitochondrial ATPase. Acts as a protease that removes N-terminal residues of mitochondrial ATPase CF(0) subunit 6 at the intermembrane space side. Also involved in the correct assembly of the membrane-embedded ATPase CF(0) particle, probably mediating association of subunit 6 with the subunit 9 ring. The polypeptide is Mitochondrial inner membrane protease ATP23 (ATP23) (Kluyveromyces lactis (strain ATCC 8585 / CBS 2359 / DSM 70799 / NBRC 1267 / NRRL Y-1140 / WM37) (Yeast)).